The following is a 366-amino-acid chain: MDSEDETVEETVEGLLDDDGLPHGFCTVNYSSTDRFEGHFVHGEKNGRGKFYFFDGSTLEGFYVDDALQGQGIYTYEDGGSLHGTYVEGELNGPAQEYDTDGRLIFKGQYKDNVRHGVCWIYYPDGGSLVGEVNEDGDMTGDKVAYVYPDGRMALYGKFIDAEMLEGKLAILTSVDEGKPHFELVPNGPVYNFDKSTPSCISVNPLFPDPYESERVYVNDSLIHNAGEGLFAKVASAAQTVMSFYNGVRITHQEVDSREWALNGNTISLDDETVLDVPAPYNSYYKYCASLGHKANHSFSPNCMYDTFVHPRFGPIKCIRTMKAVEKDEELTVAYGYDHSVTGKNGPEAPEWYQQQLTAFQATQQK.

MORN repeat units follow at residues 36 to 58 (FEGH…DGST), 59 to 81 (LEGF…DGGS), and 106 to 128 (FKGQ…DGGS). The SET domain maps to 214–336 (ERVYVNDSLI…KDEELTVAYG (123 aa)). S-adenosyl-L-methionine contacts are provided by residues 226 to 228 (AGE), asparagine 296, and histidine 297.

The protein belongs to the class V-like SAM-binding methyltransferase superfamily. Histone-lysine methyltransferase family. SET7 subfamily.

The protein resides in the nucleus. It is found in the chromosome. It catalyses the reaction L-lysyl(4)-[histone H3] + S-adenosyl-L-methionine = N(6)-methyl-L-lysyl(4)-[histone H3] + S-adenosyl-L-homocysteine + H(+). It carries out the reaction L-lysyl-[protein] + S-adenosyl-L-methionine = N(6)-methyl-L-lysyl-[protein] + S-adenosyl-L-homocysteine + H(+). Its function is as follows. Histone methyltransferase that specifically monomethylates 'Lys-4' of histone H3. H3 'Lys-4' methylation represents a specific tag for epigenetic transcriptional activation. Plays a central role in the transcriptional activation of genes. Also has methyltransferase activity toward non-histone proteins. In Xenopus tropicalis (Western clawed frog), this protein is Histone-lysine N-methyltransferase SETD7 (setd7).